The sequence spans 590 residues: MELENIVANTVLLKAREGGGGKRKGKSKKWKEILKFPHINQCEDLRRTIDRDYCSLCDKQPVGRLLFRQFCETRPGLESYIQFLDSVAEYEVTPDEKLGEKGKEIMTKYLTPKSPVFITQVGRDLVSQTEEKLLQKPCKELFSACVQSVHDYLRGEPFHEYLDSMYFDRFLQWKWLERQPVTKNTFRQYRVLGKGGFGEVCACQVRATGKMYACKRLEKKRIKKRKGESMALNEKQILEKVNSRFVVNLAYAYETKDALCLVLTIMNGGDLKFHIYNMGNPGFEEERALFYAAEILCGLEDLHHENIVYRDLKPENILLDDYGHIRISDLGLAVKIPEGDLIRGRVGTVGYMAPEVLNNQRYGLSPDYWGLGCLIYEMIEGQSPFRGRKEKVKREEVDRRVLETEEVYSHKFSEEAKSICKMLLTKDAKQRLGCQEEGAAEVKRHPFFRNMNFKRLEAGMLDPPFVPDPRAVYCKDVLDIEQFSTVKGVNLDHTDDDFYSKFSTGSVPIPWQSEMIETECFKELNVFGPHGTLSPDLNRSHPPEPPKKGLLQRLFKRQHQNNSKSSPNSKTSFNHHINSNHVSSNSTGSS.

Residues 1 to 185 form an N-terminal region; it reads MELENIVANT…LERQPVTKNT (185 aa). An interaction with calmodulin region spans residues 20–39; the sequence is GGKRKGKSKKWKEILKFPHI. An RGS domain is found at 53–171; the sequence is YCSLCDKQPV…LDSMYFDRFL (119 aa). One can recognise a Protein kinase domain in the interval 186–448; that stretch reads FRQYRVLGKG…AAEVKRHPFF (263 aa). ATP is bound by residues 192–200 and K215; that span reads LGKGGFGEV. D311 (proton acceptor) is an active-site residue. Positions 388–395 match the Nuclear localization signal motif; sequence RKEKVKRE. Residues 449 to 514 enclose the AGC-kinase C-terminal domain; sequence RNMNFKRLEA…GSVPIPWQSE (66 aa). The residue at position 484 (S484) is a Phosphoserine; by autocatalysis. At T485 the chain carries Phosphothreonine; by autocatalysis. The segment at 546 to 565 is sufficient for membrane localization; sequence PKKGLLQRLFKRQHQNNSKS. The interval 554–590 is disordered; it reads LFKRQHQNNSKSSPNSKTSFNHHINSNHVSSNSTGSS. The span at 561–590 shows a compositional bias: low complexity; it reads NNSKSSPNSKTSFNHHINSNHVSSNSTGSS. Position 579 is a phosphoserine (S579).

Belongs to the protein kinase superfamily. AGC Ser/Thr protein kinase family. GPRK subfamily. Interacts with ST13 (via the C-terminus 303-319 AA). Interacts with TP53/p53. Interacts with HTR4 (via C-terminus 330-346 AA); this interaction is promoted by 5-HT (serotonin). Interacts with HDAC5. Interacts with GIT1. Post-translationally, autophosphorylated. Autophosphorylation may play a critical role in the regulation of GRK5 kinase activity. Highest levels in lung, heart, retina, lingual epithelium. Very little in brain, liver, kidney.

It is found in the cytoplasm. Its subcellular location is the nucleus. It localises to the cell membrane. It catalyses the reaction [G-protein-coupled receptor] + ATP = [G-protein-coupled receptor]-phosphate + ADP + H(+). With respect to regulation, inhibited by calmodulin with an IC(50) of 50 nM. Calmodulin inhibits GRK5 association with receptor and phospholipid. Functionally, serine/threonine kinase that phosphorylates preferentially the activated forms of a variety of G-protein-coupled receptors (GPCRs). Such receptor phosphorylation initiates beta-arrestin-mediated receptor desensitization, internalization, and signaling events leading to their down-regulation. Phosphorylates a variety of GPCRs, including adrenergic receptors (Beta-2 adrenergic receptor), muscarinic acetylcholine receptors (more specifically Gi-coupled M2/M4 subtypes), dopamine receptors and opioid receptors. In addition to GPCRs, also phosphorylates various substrates: Hsc70-interacting protein/ST13, TP53/p53, HDAC5, and arrestin-1/ARRB1. Phosphorylation of ARRB1 by GRK5 inhibits G-protein independent MAPK1/MAPK3 signaling downstream of 5HT4-receptors. Phosphorylation of HDAC5, a repressor of myocyte enhancer factor 2 (MEF2) leading to nuclear export of HDAC5 and allowing MEF2-mediated transcription. Phosphorylation of TP53/p53, a crucial tumor suppressor, inhibits TP53/p53-mediated apoptosis. Phosphorylation of ST13 regulates internalization of the chemokine receptor. Phosphorylates rhodopsin (RHO) (in vitro) and a non G-protein-coupled receptor, LRP6 during Wnt signaling (in vitro). The chain is G protein-coupled receptor kinase 5 (GRK5) from Bos taurus (Bovine).